The sequence spans 157 residues: Transcription elongation factor GreA (157 aa).

Belongs to the GreA/GreB family.

Functionally, necessary for efficient RNA polymerase transcription elongation past template-encoded arresting sites. The arresting sites in DNA have the property of trapping a certain fraction of elongating RNA polymerases that pass through, resulting in locked ternary complexes. Cleavage of the nascent transcript by cleavage factors such as GreA or GreB allows the resumption of elongation from the new 3'terminus. GreA releases sequences of 2 to 3 nucleotides. The protein is Transcription elongation factor GreA of Caulobacter vibrioides (strain ATCC 19089 / CIP 103742 / CB 15) (Caulobacter crescentus).